We begin with the raw amino-acid sequence, 185 residues long: UPF0301 protein PSHAa2600 (185 aa).

It belongs to the UPF0301 (AlgH) family.

The protein is UPF0301 protein PSHAa2600 of Pseudoalteromonas translucida (strain TAC 125).